A 251-amino-acid chain; its full sequence is Triosephosphate isomerase (251 aa).

Asn9 to Lys11 lines the substrate pocket. Catalysis depends on His96, which acts as the Electrophile. Glu168 acts as the Proton acceptor in catalysis. Residues Gly174, Ser214, and Gly235–Gly236 contribute to the substrate site.

This sequence belongs to the triosephosphate isomerase family. In terms of assembly, homodimer.

Its subcellular location is the cytoplasm. It carries out the reaction D-glyceraldehyde 3-phosphate = dihydroxyacetone phosphate. It participates in carbohydrate biosynthesis; gluconeogenesis. The protein operates within carbohydrate degradation; glycolysis; D-glyceraldehyde 3-phosphate from glycerone phosphate: step 1/1. Functionally, involved in the gluconeogenesis. Catalyzes stereospecifically the conversion of dihydroxyacetone phosphate (DHAP) to D-glyceraldehyde-3-phosphate (G3P). This Porphyromonas gingivalis (strain ATCC BAA-308 / W83) protein is Triosephosphate isomerase.